A 452-amino-acid polypeptide reads, in one-letter code: MGKYFGTSGIREVVNEKLTPELALKVGLALGTYLGEGRVVVGIDTRTSSEMIKHALVSGLLATGIEVVDIGLAPTPLTGFAIKLYNADAGVTITASHNPPNYNGIKVWDRNGMAYTPDKESELERIIEEETFKRVSWMEIGEVIKADPKKEYIKNAVEQINLENSYTVVVDSGNGAGSIVSPYLQRELGNKVISLNSHPTGFFVRELEPNRKSLDMLSKVVREVGADVGIAHDGDADRIGVVDDQGNFVDYEVMLSLIAGYMIEKYGKGKVVTTVDAGFALDDYLKPRGGEVIRTKVGDVAVAYELSKHGGVFGGEPSGTWIIPQWNLTPDGIFAGALVVEMIDKLGPISELAKEVPRYVTLREKIPCPNELKQKVMRIIEKLALQNFEYKNLIDIDGIRIENEEWWILFRPSGTEPIMRITLEAHTKEKAEELMKKARGLVKEAIEKAKLS.

Residue Ser96 is the Phosphoserine intermediate of the active site. Mg(2+)-binding residues include Ser96, Asp233, Asp235, and Asp237. Ser96 is modified (phosphoserine).

This sequence belongs to the phosphohexose mutase family. Requires Mg(2+) as cofactor. Post-translationally, activated by phosphorylation.

The catalysed reaction is alpha-D-glucosamine 1-phosphate = D-glucosamine 6-phosphate. In terms of biological role, catalyzes the conversion of glucosamine-6-phosphate to glucosamine-1-phosphate. The polypeptide is Probable phosphoglucosamine mutase (Pyrococcus furiosus (strain ATCC 43587 / DSM 3638 / JCM 8422 / Vc1)).